A 134-amino-acid polypeptide reads, in one-letter code: DNA-binding protein H-NS homolog (134 aa).

The segment at 106–134 is disordered; sequence HKTWTGQGRTPRPIQNALNKGKSLSDFEI. The DNA-binding element occupies 112-117; it reads QGRTPR.

This sequence belongs to the histone-like protein H-NS family. Homodimer that oligomerizes on DNA into higher-order complexes that form bridges between disparate regions of DNA compacting it.

It is found in the cytoplasm. The protein localises to the nucleoid. Functionally, a DNA-binding protein implicated in transcriptional repression and chromosome organization and compaction. Binds nucleation sites in AT-rich DNA and bridges them, forming higher-order nucleoprotein complexes and condensing the chromosome. As many horizontally transferred genes are AT-rich, it plays a central role in silencing foreign genes. A subset of genes are repressed by H-NS in association with other proteins. The protein is DNA-binding protein H-NS homolog (hns) of Haemophilus influenzae (strain ATCC 51907 / DSM 11121 / KW20 / Rd).